A 108-amino-acid polypeptide reads, in one-letter code: Parvalbumin beta (108 aa).

EF-hand domains lie at Lys38–Thr73 and Leu77–Ala108. Ca(2+) is bound by residues Asp51, Asp53, Ser55, Phe57, Glu59, Glu62, Asp90, Asp92, Asp94, Lys96, and Glu101.

This sequence belongs to the parvalbumin family.

In muscle, parvalbumin is thought to be involved in relaxation after contraction. It binds two calcium ions. The chain is Parvalbumin beta from Graptemys geographica (Common map turtle).